We begin with the raw amino-acid sequence, 166 residues long: Ribosome maturation factor RimM (166 aa).

The PRC barrel domain maps to 90-163; that stretch reads EGQYFIKDII…KIVIKAVEEW (74 aa).

This sequence belongs to the RimM family. Binds ribosomal protein uS19.

It is found in the cytoplasm. In terms of biological role, an accessory protein needed during the final step in the assembly of 30S ribosomal subunit, possibly for assembly of the head region. Essential for efficient processing of 16S rRNA. May be needed both before and after RbfA during the maturation of 16S rRNA. It has affinity for free ribosomal 30S subunits but not for 70S ribosomes. The chain is Ribosome maturation factor RimM from Clostridium acetobutylicum (strain ATCC 824 / DSM 792 / JCM 1419 / IAM 19013 / LMG 5710 / NBRC 13948 / NRRL B-527 / VKM B-1787 / 2291 / W).